The following is a 494-amino-acid chain: Ectonucleoside triphosphate diphosphohydrolase 8 (494 aa).

Over 1–8 (MRLSWKER) the chain is Cytoplasmic. A helical transmembrane segment spans residues 9-29 (VFMVLLGVAAASGLTMLILIL). The Extracellular segment spans residues 30 to 465 (VKATNVLLPA…LTQWRAQSYS (436 aa)). Cysteine 78 and cysteine 102 are oxidised to a cystine. Catalysis depends on glutamate 168, which acts as the Proton acceptor. Cysteines 245 and 291 form a disulfide. N-linked (GlcNAc...) asparagine glycosylation is found at asparagine 299 and asparagine 303. Cysteines 328 and 334 form a disulfide. The N-linked (GlcNAc...) asparagine glycan is linked to asparagine 362. Cysteine 380 and cysteine 402 are oxidised to a cystine. The chain crosses the membrane as a helical span at residues 466 to 486 (IWIAGVVFAVLTLVAILGAAA). At 487–494 (VQLFWTQD) the chain is on the cytoplasmic side.

Belongs to the GDA1/CD39 NTPase family. Ca(2+) is required as a cofactor. Mg(2+) serves as cofactor. Post-translationally, N-glycosylated. In terms of tissue distribution, present in liver, and at lower level in jejunum and kidney. Limited to the canalicular domain of hepatocytes (at protein level).

It is found in the cell membrane. The enzyme catalyses a ribonucleoside 5'-triphosphate + 2 H2O = a ribonucleoside 5'-phosphate + 2 phosphate + 2 H(+). Canalicular ectonucleoside NTPDase responsible for the main hepatic NTPDase activity. Ectonucleoside NTPDases catalyze the hydrolysis of gamma- and beta-phosphate residues of nucleotides, playing a central role in concentration of extracellular nucleotides. Has activity toward ATP, ADP, UTP and UDP, but not toward AMP. The sequence is that of Ectonucleoside triphosphate diphosphohydrolase 8 (Entpd8) from Rattus norvegicus (Rat).